We begin with the raw amino-acid sequence, 647 residues long: Phosphomethylpyrimidine synthase (647 aa).

Substrate contacts are provided by residues Asn-235, Met-264, Tyr-293, His-329, 349–351 (SRG), 390–393 (DGLR), and Glu-429. His-433 is a binding site for Zn(2+). Substrate is bound at residue Tyr-456. His-497 contributes to the Zn(2+) binding site. Cys-577, Cys-580, and Cys-585 together coordinate [4Fe-4S] cluster. Residues 623–647 (KSAEFKASGSELYHPAVSHEEVAEG) are disordered.

The protein belongs to the ThiC family. In terms of assembly, homodimer. Requires [4Fe-4S] cluster as cofactor.

It catalyses the reaction 5-amino-1-(5-phospho-beta-D-ribosyl)imidazole + S-adenosyl-L-methionine = 4-amino-2-methyl-5-(phosphooxymethyl)pyrimidine + CO + 5'-deoxyadenosine + formate + L-methionine + 3 H(+). The protein operates within cofactor biosynthesis; thiamine diphosphate biosynthesis. Functionally, catalyzes the synthesis of the hydroxymethylpyrimidine phosphate (HMP-P) moiety of thiamine from aminoimidazole ribotide (AIR) in a radical S-adenosyl-L-methionine (SAM)-dependent reaction. The protein is Phosphomethylpyrimidine synthase of Vibrio vulnificus (strain CMCP6).